Reading from the N-terminus, the 657-residue chain is Glycogen debranching enzyme (657 aa).

Asp-336 acts as the Nucleophile in catalysis. Glu-371 serves as the catalytic Proton donor. Residues Asn-458–Asp-467 show a composition bias toward basic and acidic residues. Residues Asn-458–Lys-479 are disordered.

It belongs to the glycosyl hydrolase 13 family.

The enzyme catalyses Hydrolysis of (1-&gt;6)-alpha-D-glucosidic linkages to branches with degrees of polymerization of three or four glucose residues in limit dextrin.. It participates in glycan degradation; glycogen degradation. Functionally, removes maltotriose and maltotetraose chains that are attached by 1,6-alpha-linkage to the limit dextrin main chain, generating a debranched limit dextrin. The sequence is that of Glycogen debranching enzyme from Shigella sonnei (strain Ss046).